The chain runs to 121 residues: Putative RNase MJ1216 (121 aa).

Residues arginine 76 and histidine 81 contribute to the active site. Residues 76 to 83 (RDKLIHQY) carry the RX(4)HXY motif motif. Tyrosine 83 is subject to O-di-AMP-tyrosine.

Belongs to the HepT RNase toxin family. In terms of assembly, homodimer, probably forms a complex with antitoxin MJ1215 or MJ1217. In terms of processing, modified by antitoxin MJ1215 or MJ1217; probably at least 2 successive AMPylation events occur on Tyr-83.

Functionally, probable toxic component of a putative type VII toxin-antitoxin (TA) system, probably an RNase. Probably neutralized by antitoxin MJ1215 or MJ1217. Neutralization may be due to AMPylation by antitoxin. This Methanocaldococcus jannaschii (strain ATCC 43067 / DSM 2661 / JAL-1 / JCM 10045 / NBRC 100440) (Methanococcus jannaschii) protein is Putative RNase MJ1216.